Consider the following 242-residue polypeptide: Glucosamine-6-phosphate deaminase (242 aa).

The active-site Proton acceptor; for enolization step is the Asp67. Residue Asn136 is the For ring-opening step of the active site. His138 (proton acceptor; for ring-opening step) is an active-site residue. Catalysis depends on Glu143, which acts as the For ring-opening step.

This sequence belongs to the glucosamine/galactosamine-6-phosphate isomerase family. NagB subfamily.

It carries out the reaction alpha-D-glucosamine 6-phosphate + H2O = beta-D-fructose 6-phosphate + NH4(+). The protein operates within amino-sugar metabolism; N-acetylneuraminate degradation; D-fructose 6-phosphate from N-acetylneuraminate: step 5/5. Functionally, catalyzes the reversible isomerization-deamination of glucosamine 6-phosphate (GlcN6P) to form fructose 6-phosphate (Fru6P) and ammonium ion. The polypeptide is Glucosamine-6-phosphate deaminase (Clostridium perfringens (strain ATCC 13124 / DSM 756 / JCM 1290 / NCIMB 6125 / NCTC 8237 / Type A)).